Consider the following 201-residue polypeptide: Large ribosomal subunit protein uL4 (201 aa).

Residues 45–71 are disordered; it reads AQKTRAEVTGSGKKPWRQKGTGRARAG.

This sequence belongs to the universal ribosomal protein uL4 family. In terms of assembly, part of the 50S ribosomal subunit.

Functionally, one of the primary rRNA binding proteins, this protein initially binds near the 5'-end of the 23S rRNA. It is important during the early stages of 50S assembly. It makes multiple contacts with different domains of the 23S rRNA in the assembled 50S subunit and ribosome. Its function is as follows. Forms part of the polypeptide exit tunnel. This is Large ribosomal subunit protein uL4 from Shewanella oneidensis (strain ATCC 700550 / JCM 31522 / CIP 106686 / LMG 19005 / NCIMB 14063 / MR-1).